The chain runs to 345 residues: MRVADFTFDLPDELIARYPMAERTASRLLHLDGSTGALADRQFTDILALIEPGDLMIFNNTRVIPARLFGQKASGGKLEILVERMLDDKRILAHVRSSKSPKPGAEIILDGGFKMTMDARHDALFELSLKDDKTILEVLEAVGHMPLPPYIDRPDEDTDKERYQTVYNERPGAVAAPTAGLHFDESILAALKAKGVDMAFVTLHVGAGTFQPVRVDNVLEHKMHSEWAEVPADVVEKIRATKAAGKRVIAVGTTSVRSLESAAKASEGELEPFCGDTDIFIFPGFEFKVVDAMVTNFHLPESTLIMLVSAFAGFDEVIGAYRHAVEQKYRFFSYGDAMFVTKKAP.

The protein belongs to the QueA family. Monomer.

It localises to the cytoplasm. The catalysed reaction is 7-aminomethyl-7-carbaguanosine(34) in tRNA + S-adenosyl-L-methionine = epoxyqueuosine(34) in tRNA + adenine + L-methionine + 2 H(+). The protein operates within tRNA modification; tRNA-queuosine biosynthesis. Its function is as follows. Transfers and isomerizes the ribose moiety from AdoMet to the 7-aminomethyl group of 7-deazaguanine (preQ1-tRNA) to give epoxyqueuosine (oQ-tRNA). The sequence is that of S-adenosylmethionine:tRNA ribosyltransferase-isomerase from Shewanella amazonensis (strain ATCC BAA-1098 / SB2B).